The primary structure comprises 325 residues: 4-hydroxy-3-methylbut-2-enyl diphosphate reductase (325 aa).

Cys-13 lines the [4Fe-4S] cluster pocket. The (2E)-4-hydroxy-3-methylbut-2-enyl diphosphate site is built by His-42 and His-76. The dimethylallyl diphosphate site is built by His-42 and His-76. Isopentenyl diphosphate-binding residues include His-42 and His-76. Cys-98 is a [4Fe-4S] cluster binding site. His-126 lines the (2E)-4-hydroxy-3-methylbut-2-enyl diphosphate pocket. His-126 contacts dimethylallyl diphosphate. His-126 is a binding site for isopentenyl diphosphate. The active-site Proton donor is the Glu-128. Thr-169 lines the (2E)-4-hydroxy-3-methylbut-2-enyl diphosphate pocket. Cys-230 serves as a coordination point for [4Fe-4S] cluster. Positions 258, 259, 260, and 306 each coordinate (2E)-4-hydroxy-3-methylbut-2-enyl diphosphate. Dimethylallyl diphosphate contacts are provided by Ser-258, Ser-259, Asn-260, and Ser-306. Ser-258, Ser-259, Asn-260, and Ser-306 together coordinate isopentenyl diphosphate.

It belongs to the IspH family. It depends on [4Fe-4S] cluster as a cofactor.

It catalyses the reaction isopentenyl diphosphate + 2 oxidized [2Fe-2S]-[ferredoxin] + H2O = (2E)-4-hydroxy-3-methylbut-2-enyl diphosphate + 2 reduced [2Fe-2S]-[ferredoxin] + 2 H(+). The enzyme catalyses dimethylallyl diphosphate + 2 oxidized [2Fe-2S]-[ferredoxin] + H2O = (2E)-4-hydroxy-3-methylbut-2-enyl diphosphate + 2 reduced [2Fe-2S]-[ferredoxin] + 2 H(+). It functions in the pathway isoprenoid biosynthesis; dimethylallyl diphosphate biosynthesis; dimethylallyl diphosphate from (2E)-4-hydroxy-3-methylbutenyl diphosphate: step 1/1. The protein operates within isoprenoid biosynthesis; isopentenyl diphosphate biosynthesis via DXP pathway; isopentenyl diphosphate from 1-deoxy-D-xylulose 5-phosphate: step 6/6. Its function is as follows. Catalyzes the conversion of 1-hydroxy-2-methyl-2-(E)-butenyl 4-diphosphate (HMBPP) into a mixture of isopentenyl diphosphate (IPP) and dimethylallyl diphosphate (DMAPP). Acts in the terminal step of the DOXP/MEP pathway for isoprenoid precursor biosynthesis. In Chlorobium phaeobacteroides (strain BS1), this protein is 4-hydroxy-3-methylbut-2-enyl diphosphate reductase.